Here is an 820-residue protein sequence, read N- to C-terminus: Trimethylamine-N-oxide reductase (820 aa).

The segment at residues 1 to 33 is a signal peptide (tat-type signal); that stretch reads MAITRRSFLKGVATTSAASVIGPSLLASASANA. Position 179 (S179) interacts with Mo-bis(molybdopterin guanine dinucleotide).

It belongs to the prokaryotic molybdopterin-containing oxidoreductase family. Mo-bis(molybdopterin guanine dinucleotide) is required as a cofactor. Post-translationally, predicted to be exported by the Tat system. The position of the signal peptide cleavage has not been experimentally proven.

Its subcellular location is the periplasm. The enzyme catalyses trimethylamine + 2 Fe(III)-[cytochrome c] + H2O = trimethylamine N-oxide + 2 Fe(II)-[cytochrome c] + 3 H(+). Reduces trimethylamine-N-oxide (TMAO) into trimethylamine; an anaerobic reaction coupled to energy-yielding reactions. This is Trimethylamine-N-oxide reductase (torA) from Vibrio parahaemolyticus serotype O3:K6 (strain RIMD 2210633).